The sequence spans 85 residues: Exodeoxyribonuclease 7 small subunit (85 aa).

This sequence belongs to the XseB family. In terms of assembly, heterooligomer composed of large and small subunits.

It is found in the cytoplasm. It catalyses the reaction Exonucleolytic cleavage in either 5'- to 3'- or 3'- to 5'-direction to yield nucleoside 5'-phosphates.. In terms of biological role, bidirectionally degrades single-stranded DNA into large acid-insoluble oligonucleotides, which are then degraded further into small acid-soluble oligonucleotides. The polypeptide is Exodeoxyribonuclease 7 small subunit (Alkalilimnicola ehrlichii (strain ATCC BAA-1101 / DSM 17681 / MLHE-1)).